Reading from the N-terminus, the 97-residue chain is YcgL domain-containing protein PMI1171 (97 aa).

Residues 3–87 (MICAIYRSTK…PVESMLNAYL (85 aa)) form the YcgL domain.

The protein is YcgL domain-containing protein PMI1171 of Proteus mirabilis (strain HI4320).